We begin with the raw amino-acid sequence, 77 residues long: DNA-directed RNA polymerase subunit Rpo5 (77 aa).

It belongs to the archaeal Rpo5/eukaryotic RPB5 RNA polymerase subunit family. As to quaternary structure, part of the RNA polymerase complex.

The protein resides in the cytoplasm. It carries out the reaction RNA(n) + a ribonucleoside 5'-triphosphate = RNA(n+1) + diphosphate. Functionally, DNA-dependent RNA polymerase (RNAP) catalyzes the transcription of DNA into RNA using the four ribonucleoside triphosphates as substrates. The protein is DNA-directed RNA polymerase subunit Rpo5 of Methanothermobacter thermautotrophicus (strain ATCC 29096 / DSM 1053 / JCM 10044 / NBRC 100330 / Delta H) (Methanobacterium thermoautotrophicum).